The following is a 75-amino-acid chain: Large ribosomal subunit protein bL31 (75 aa).

This sequence belongs to the bacterial ribosomal protein bL31 family. Type A subfamily. Part of the 50S ribosomal subunit.

In terms of biological role, binds the 23S rRNA. This chain is Large ribosomal subunit protein bL31, found in Nitrobacter winogradskyi (strain ATCC 25391 / DSM 10237 / CIP 104748 / NCIMB 11846 / Nb-255).